The following is a 396-amino-acid chain: Elongation factor Tu 2 (396 aa).

The 197-residue stretch at 10 to 206 folds into the tr-type G domain; that stretch reads KPHVNIGTIG…AVDEYIPTPE (197 aa). The interval 19-26 is G1; that stretch reads GHVDHGKT. Position 19–26 (19–26) interacts with GTP; sequence GHVDHGKT. Thr26 lines the Mg(2+) pocket. A G2 region spans residues 60–64; the sequence is GITIN. Positions 81–84 are G3; that stretch reads DCPG. GTP contacts are provided by residues 81–85 and 136–139; these read DCPGH and NKVD. The segment at 136–139 is G4; sequence NKVD. Residues 174–176 are G5; it reads SAL.

Belongs to the TRAFAC class translation factor GTPase superfamily. Classic translation factor GTPase family. EF-Tu/EF-1A subfamily. In terms of assembly, monomer.

The protein localises to the cytoplasm. It catalyses the reaction GTP + H2O = GDP + phosphate + H(+). Functionally, GTP hydrolase that promotes the GTP-dependent binding of aminoacyl-tRNA to the A-site of ribosomes during protein biosynthesis. This chain is Elongation factor Tu 2, found in Hyphomonas neptunium (strain ATCC 15444).